The sequence spans 85 residues: UPF0335 protein BQ12070 (85 aa).

This sequence belongs to the UPF0335 family.

The sequence is that of UPF0335 protein BQ12070 from Bartonella quintana (strain Toulouse) (Rochalimaea quintana).